The following is a 248-amino-acid chain: MNIWIRGGTSDANNISKEIKRNFKDSFLILTTTTDFGGKIAENFADLVISEKMTYDNLKKTLLDKKIDVFIDATHPFATHASETGIKISKELNIPYIRYERPSEKFKNAFYVENYEEAAKLALKISKKNIFYMSGIKNLKNVSEIIPIEKLIVRILPTSVPEALKILPSKNIVAMQGVFSENLNKELIIDYNCDVIITKDSGKSGGLYEKVSGATLAGAKPIIIKRPEINYPLKFEKIVEIVNYLKNV.

It belongs to the precorrin-6x reductase family.

It carries out the reaction Co-precorrin-6B + NAD(+) = Co-precorrin-6A + NADH + H(+). The protein operates within cofactor biosynthesis; adenosylcobalamin biosynthesis; cob(II)yrinate a,c-diamide from sirohydrochlorin (anaerobic route): step 7/10. In terms of biological role, catalyzes the reduction of the macrocycle of cobalt-precorrin-6A to cobalt-precorrin-6B. In Methanococcus maripaludis (Methanococcus deltae), this protein is Cobalt-precorrin-6A reductase (cbiJ).